Reading from the N-terminus, the 149-residue chain is Large ribosomal subunit protein bL9 (149 aa).

It belongs to the bacterial ribosomal protein bL9 family.

In terms of biological role, binds to the 23S rRNA. This is Large ribosomal subunit protein bL9 from Geobacillus kaustophilus (strain HTA426).